The following is a 477-amino-acid chain: Adenylyl cyclase-associated protein 2 (477 aa).

Ala2 carries the N-acetylalanine modification. Disordered stretches follow at residues 225 to 261 (LSSG…PSRS) and 274 to 321 (TKGL…SQKH). Over residues 230-246 (GLPPPPPPLPPPGPPPL) the composition is skewed to pro residues. Residues 298-320 (QTQSPTKSHTPSPTSPKSYPSQK) are compositionally biased toward low complexity. Ser301 and Ser309 each carry phosphoserine. One can recognise a C-CAP/cofactor C-like domain in the interval 317 to 455 (PSQKHAPVLE…QDGDYREFPI (139 aa)).

It belongs to the CAP family.

It localises to the cell membrane. Functionally, involved in the regulation of actin polymerization. The chain is Adenylyl cyclase-associated protein 2 (CAP2) from Homo sapiens (Human).